Consider the following 351-residue polypeptide: Molybdenum import ATP-binding protein ModC (351 aa).

Positions Met1–Ser229 constitute an ABC transporter domain. An ATP-binding site is contributed by Gly31 to Thr38. In terms of domain architecture, Mop spans Gln289–Met351.

This sequence belongs to the ABC transporter superfamily. Molybdate importer (TC 3.A.1.8) family. In terms of assembly, the complex is composed of two ATP-binding proteins (ModC), two transmembrane proteins (ModB) and a solute-binding protein (ModA).

Its subcellular location is the cell inner membrane. The enzyme catalyses molybdate(out) + ATP + H2O = molybdate(in) + ADP + phosphate + H(+). In terms of biological role, part of the ABC transporter complex ModABC involved in molybdenum import. Responsible for energy coupling to the transport system. The polypeptide is Molybdenum import ATP-binding protein ModC (Haemophilus influenzae (strain ATCC 51907 / DSM 11121 / KW20 / Rd)).